Reading from the N-terminus, the 334-residue chain is Heme A synthase (334 aa).

A run of 5 helical transmembrane segments spans residues Ile-6–Ile-26, Gly-93–Ile-113, Leu-119–Val-139, Leu-154–Lys-174, and Leu-189–Val-209. Residue His-253 coordinates heme. The next 3 helical transmembrane spans lie at Leu-255 to Lys-275, Ile-282 to Val-302, and Val-305 to Ile-325. Heme is bound at residue His-313.

It belongs to the COX15/CtaA family. Type 2 subfamily. Interacts with CtaB. The cofactor is heme b.

Its subcellular location is the cell membrane. It catalyses the reaction Fe(II)-heme o + 2 A + H2O = Fe(II)-heme a + 2 AH2. Its pathway is porphyrin-containing compound metabolism; heme A biosynthesis; heme A from heme O: step 1/1. Catalyzes the conversion of heme O to heme A by two successive hydroxylations of the methyl group at C8. The first hydroxylation forms heme I, the second hydroxylation results in an unstable dihydroxymethyl group, which spontaneously dehydrates, resulting in the formyl group of heme A. This chain is Heme A synthase, found in Rickettsia prowazekii (strain Madrid E).